A 207-amino-acid chain; its full sequence is Ribonuclease HII (207 aa).

One can recognise an RNase H type-2 domain in the interval 18–207; that stretch reads GLVAGVDEAG…VAEVLREALP (190 aa). Positions 24, 25, and 116 each coordinate a divalent metal cation.

This sequence belongs to the RNase HII family. It depends on Mn(2+) as a cofactor. The cofactor is Mg(2+).

It localises to the cytoplasm. It catalyses the reaction Endonucleolytic cleavage to 5'-phosphomonoester.. Its function is as follows. Endonuclease that specifically degrades the RNA of RNA-DNA hybrids. This chain is Ribonuclease HII, found in Albidiferax ferrireducens (strain ATCC BAA-621 / DSM 15236 / T118) (Rhodoferax ferrireducens).